Consider the following 493-residue polypeptide: Glycerol kinase (493 aa).

ADP is bound at residue Thr-12. Positions 12, 13, and 14 each coordinate ATP. Position 12 (Thr-12) interacts with sn-glycerol 3-phosphate. ADP is bound at residue Arg-16. Positions 82, 83, 132, and 239 each coordinate sn-glycerol 3-phosphate. Glycerol-binding residues include Arg-82, Glu-83, Tyr-132, Asp-239, and Gln-240. Residues Thr-261 and Gly-303 each coordinate ADP. Thr-261, Gly-303, Gln-307, and Gly-402 together coordinate ATP. 2 residues coordinate ADP: Gly-402 and Asn-406.

The protein belongs to the FGGY kinase family.

The enzyme catalyses glycerol + ATP = sn-glycerol 3-phosphate + ADP + H(+). It participates in polyol metabolism; glycerol degradation via glycerol kinase pathway; sn-glycerol 3-phosphate from glycerol: step 1/1. Its function is as follows. Key enzyme in the regulation of glycerol uptake and metabolism. Catalyzes the phosphorylation of glycerol to yield sn-glycerol 3-phosphate. The sequence is that of Glycerol kinase from Thermococcus onnurineus (strain NA1).